A 204-amino-acid chain; its full sequence is Acyl-homoserine-lactone synthase (204 aa).

This sequence belongs to the autoinducer synthase family.

The enzyme catalyses a fatty acyl-[ACP] + S-adenosyl-L-methionine = an N-acyl-L-homoserine lactone + S-methyl-5'-thioadenosine + holo-[ACP] + H(+). Functionally, required for the synthesis of acyl-HSL autoinducers that bind to SolR. The protein is Acyl-homoserine-lactone synthase (solI) of Ralstonia solanacearum (Pseudomonas solanacearum).